Consider the following 425-residue polypeptide: RNA polymerase II-associated factor 1 homolog (425 aa).

Residues 152-174 (KKNQQVEDMYRDKQSQIDAINKT) are a coiled coil. The tract at residues 331 to 425 (SRKSKLTLTY…KEPTVDSDSD (95 aa)) is disordered. Basic and acidic residues-rich tracts occupy residues 344–380 (SELE…KEEG) and 393–402 (DKPQKSRSDS).

Belongs to the PAF1 family. In terms of assembly, component of the PAF1 complex which consists of at least cdc-73, ctr-9, leo-1, pafo-1 and rtfo-1.

It is found in the nucleus. Component of the PAF1 complex which is a multifunctional complex involved in transcription initiation via genetic interactions with TATA-binding proteins, elongation and transcription-coupled histone modification. This Caenorhabditis elegans protein is RNA polymerase II-associated factor 1 homolog.